A 203-amino-acid polypeptide reads, in one-letter code: E3 ubiquitin-protein ligase rnf152-B (203 aa).

Residues 12-55 (CQICFNYYSPRRRPKLLDCKHTCCSVCLQQMRASQKDLRCPWCR) form an RING-type zinc finger. A helical transmembrane segment spans residues 167-187 (SGVCTVILVACVLVFLLGIVL).

The protein belongs to the RNF152 family.

The protein localises to the lysosome membrane. The enzyme catalyses S-ubiquitinyl-[E2 ubiquitin-conjugating enzyme]-L-cysteine + [acceptor protein]-L-lysine = [E2 ubiquitin-conjugating enzyme]-L-cysteine + N(6)-ubiquitinyl-[acceptor protein]-L-lysine.. It participates in protein modification; protein ubiquitination. Functionally, E3 ubiquitin-protein ligase that acts as a negative regulator of mTORC1 signaling by mediating ubiquitination of RagA/RRAGA and RHEB. Catalyzes 'Lys-63'-linked polyubiquitination of RagA/RRAGA in response to amino acid starvation, thereby regulating mTORC1 signaling. Also mediates monoubiquitination of RHEB, promoting its association with the TSC-TBC complex and subsequent inhibition. Also mediates 'Lys-48'-linked polyubiquitination of target proteins and their subsequent targeting to the proteasome for degradation. This chain is E3 ubiquitin-protein ligase rnf152-B, found in Xenopus laevis (African clawed frog).